The following is a 172-amino-acid chain: Adenine phosphoribosyltransferase (172 aa).

Belongs to the purine/pyrimidine phosphoribosyltransferase family. As to quaternary structure, homodimer.

It localises to the cytoplasm. It catalyses the reaction AMP + diphosphate = 5-phospho-alpha-D-ribose 1-diphosphate + adenine. It participates in purine metabolism; AMP biosynthesis via salvage pathway; AMP from adenine: step 1/1. Its function is as follows. Catalyzes a salvage reaction resulting in the formation of AMP, that is energically less costly than de novo synthesis. This chain is Adenine phosphoribosyltransferase, found in Clostridium kluyveri (strain NBRC 12016).